A 285-amino-acid chain; its full sequence is CCR4-NOT transcription complex subunit 7 (285 aa).

Residues aspartate 40, glutamate 42, aspartate 161, aspartate 230, and glutamate 278 each contribute to the a divalent metal cation site.

The protein belongs to the CAF1 family. As to quaternary structure, component of the CCR4-NOT complex. The cofactor is Mn(2+). Mg(2+) serves as cofactor. Co(2+) is required as a cofactor.

Its subcellular location is the nucleus. The protein localises to the cytoplasm. The catalysed reaction is Exonucleolytic cleavage of poly(A) to 5'-AMP.. Functionally, has 3'-5' poly(A) exoribonuclease activity for synthetic poly(A) RNA substrate. Catalytic component of the CCR4-NOT complex which is one of the major cellular mRNA deadenylases and is linked to various cellular processes including bulk mRNA degradation, miRNA-mediated repression, translational repression during translational initiation and general transcription regulation. During miRNA-mediated repression the complex also seems to act as translational repressor during translational initiation. Additional complex functions may be a consequence of its influence on mRNA expression. In Gallus gallus (Chicken), this protein is CCR4-NOT transcription complex subunit 7 (CNOT7).